Consider the following 324-residue polypeptide: Methionyl-tRNA formyltransferase (324 aa).

112–115 (SILP) is a (6S)-5,6,7,8-tetrahydrofolate binding site.

It belongs to the Fmt family.

It catalyses the reaction L-methionyl-tRNA(fMet) + (6R)-10-formyltetrahydrofolate = N-formyl-L-methionyl-tRNA(fMet) + (6S)-5,6,7,8-tetrahydrofolate + H(+). In terms of biological role, attaches a formyl group to the free amino group of methionyl-tRNA(fMet). The formyl group appears to play a dual role in the initiator identity of N-formylmethionyl-tRNA by promoting its recognition by IF2 and preventing the misappropriation of this tRNA by the elongation apparatus. This is Methionyl-tRNA formyltransferase from Shewanella loihica (strain ATCC BAA-1088 / PV-4).